The chain runs to 440 residues: MSEFSQTVPELVAWARKNDFSISLPTERLAFLLAIATLNGERLDGEMSEGELVDAFRHVSKGFEQTHETVAVRANNAINDMVRQRLLNRFISELADGNAIYRLTPLGIGITDYYIRQREFSTLRLSMQLSIVAQELKRAADAADEGGDDFHWHRNVFAPLKYSVAEIFDSIDLTQRIMDEQQQGVKDDIAALLNKDWRAAISSCEMLLSETSGTLRELQDTLEAAGDKLQANLLRIQDATLGGAELGFIDKLVFDLQSKLDRIISWGQQAIDLWIGYDRHVHKFIRTAIDMDKNRVFAQRLRQSVQNYFDNPWTLTHANADRLLDMRDEELALRSEEVTGELPPDLEFEEFSEIREQLAAMIEQALKIYQEQQMPLNLGAVMRDYLAQYPRARHFDVARLVVDQAVRLGVAEADFSGLPAQWQAINDYGAKVQAHVIDKY.

A leucine-zipper region spans residues 208-236 (LSETSGTLRELQDTLEAAGDKLQANLLRI).

It belongs to the MukF family. As to quaternary structure, interacts, and probably forms a ternary complex, with MukE and MukB via its C-terminal region. The complex formation is stimulated by calcium or magnesium. It is required for an interaction between MukE and MukB.

Its subcellular location is the cytoplasm. It localises to the nucleoid. Functionally, involved in chromosome condensation, segregation and cell cycle progression. May participate in facilitating chromosome segregation by condensation DNA from both sides of a centrally located replisome during cell division. Not required for mini-F plasmid partitioning. Probably acts via its interaction with MukB and MukE. Overexpression results in anucleate cells. It has a calcium binding activity. The polypeptide is Chromosome partition protein MukF (Serratia proteamaculans (strain 568)).